Consider the following 47-residue polypeptide: U18-ctenitoxin-Pn1a (47 aa).

Intrachain disulfides connect Cys2–Cys16, Cys9–Cys22, Cys13–Cys46, Cys15–Cys34, and Cys24–Cys32.

As to expression, expressed by the venom gland.

It is found in the secreted. Its function is as follows. Neurotoxin. Causes spastic paralysis and death in mice by intracerebroventricular injection at dose levels of 3 ug per mouse. This is U18-ctenitoxin-Pn1a from Phoneutria nigriventer (Brazilian armed spider).